Consider the following 316-residue polypeptide: Pantothenate kinase (316 aa).

Residue 95–102 (GSVAVGKS) coordinates ATP.

This sequence belongs to the prokaryotic pantothenate kinase family.

The protein resides in the cytoplasm. The enzyme catalyses (R)-pantothenate + ATP = (R)-4'-phosphopantothenate + ADP + H(+). It participates in cofactor biosynthesis; coenzyme A biosynthesis; CoA from (R)-pantothenate: step 1/5. This chain is Pantothenate kinase, found in Pectobacterium carotovorum subsp. carotovorum (strain PC1).